The following is a 108-amino-acid chain: Tetrahydromethanopterin S-methyltransferase subunit B (108 aa).

The helical transmembrane segment at 77–99 (FQGMFFGFWVTMAVLVLVTILAV) threads the bilayer.

It belongs to the MtrB family. In terms of assembly, the complex is composed of 8 subunits; MtrA, MtrB, MtrC, MtrD, MtrE, MtrF, MtrG and MtrH.

The protein localises to the cell membrane. The catalysed reaction is 5-methyl-5,6,7,8-tetrahydromethanopterin + coenzyme M + 2 Na(+)(in) = 5,6,7,8-tetrahydromethanopterin + methyl-coenzyme M + 2 Na(+)(out). Its pathway is one-carbon metabolism; methanogenesis from CO(2); methyl-coenzyme M from 5,10-methylene-5,6,7,8-tetrahydromethanopterin: step 2/2. Functionally, part of a complex that catalyzes the formation of methyl-coenzyme M and tetrahydromethanopterin from coenzyme M and methyl-tetrahydromethanopterin. This is an energy-conserving, sodium-ion translocating step. The protein is Tetrahydromethanopterin S-methyltransferase subunit B of Methanococcus maripaludis (strain DSM 14266 / JCM 13030 / NBRC 101832 / S2 / LL).